The following is a 274-amino-acid chain: 2,3,4,5-tetrahydropyridine-2,6-dicarboxylate N-succinyltransferase (274 aa).

Residues arginine 106 and aspartate 143 each contribute to the substrate site.

This sequence belongs to the transferase hexapeptide repeat family. Homotrimer.

The protein resides in the cytoplasm. The catalysed reaction is (S)-2,3,4,5-tetrahydrodipicolinate + succinyl-CoA + H2O = (S)-2-succinylamino-6-oxoheptanedioate + CoA. The protein operates within amino-acid biosynthesis; L-lysine biosynthesis via DAP pathway; LL-2,6-diaminopimelate from (S)-tetrahydrodipicolinate (succinylase route): step 1/3. This is 2,3,4,5-tetrahydropyridine-2,6-dicarboxylate N-succinyltransferase from Acidovorax sp. (strain JS42).